Here is a 129-residue protein sequence, read N- to C-terminus: UPF0102 protein Mrad2831_2938 (129 aa).

The protein belongs to the UPF0102 family.

The chain is UPF0102 protein Mrad2831_2938 from Methylobacterium radiotolerans (strain ATCC 27329 / DSM 1819 / JCM 2831 / NBRC 15690 / NCIMB 10815 / 0-1).